The chain runs to 119 residues: Ribonuclease P protein component (119 aa).

This sequence belongs to the RnpA family. In terms of assembly, consists of a catalytic RNA component (M1 or rnpB) and a protein subunit.

The enzyme catalyses Endonucleolytic cleavage of RNA, removing 5'-extranucleotides from tRNA precursor.. In terms of biological role, RNaseP catalyzes the removal of the 5'-leader sequence from pre-tRNA to produce the mature 5'-terminus. It can also cleave other RNA substrates such as 4.5S RNA. The protein component plays an auxiliary but essential role in vivo by binding to the 5'-leader sequence and broadening the substrate specificity of the ribozyme. The polypeptide is Ribonuclease P protein component (Streptococcus gordonii (strain Challis / ATCC 35105 / BCRC 15272 / CH1 / DL1 / V288)).